A 330-amino-acid chain; its full sequence is Lipoyl synthase (330 aa).

[4Fe-4S] cluster contacts are provided by Cys77, Cys82, Cys88, Cys103, Cys107, Cys110, and Ser317. Residues 89 to 306 (FNHGTATFMI…RSEAEKMGFE (218 aa)) form the Radical SAM core domain.

It belongs to the radical SAM superfamily. Lipoyl synthase family. The cofactor is [4Fe-4S] cluster.

It is found in the cytoplasm. The catalysed reaction is [[Fe-S] cluster scaffold protein carrying a second [4Fe-4S](2+) cluster] + N(6)-octanoyl-L-lysyl-[protein] + 2 oxidized [2Fe-2S]-[ferredoxin] + 2 S-adenosyl-L-methionine + 4 H(+) = [[Fe-S] cluster scaffold protein] + N(6)-[(R)-dihydrolipoyl]-L-lysyl-[protein] + 4 Fe(3+) + 2 hydrogen sulfide + 2 5'-deoxyadenosine + 2 L-methionine + 2 reduced [2Fe-2S]-[ferredoxin]. It participates in protein modification; protein lipoylation via endogenous pathway; protein N(6)-(lipoyl)lysine from octanoyl-[acyl-carrier-protein]: step 2/2. Functionally, catalyzes the radical-mediated insertion of two sulfur atoms into the C-6 and C-8 positions of the octanoyl moiety bound to the lipoyl domains of lipoate-dependent enzymes, thereby converting the octanoylated domains into lipoylated derivatives. This Haemophilus ducreyi (strain 35000HP / ATCC 700724) protein is Lipoyl synthase.